The sequence spans 307 residues: tRNA pseudouridine synthase B (307 aa).

Aspartate 38 functions as the Nucleophile in the catalytic mechanism.

It belongs to the pseudouridine synthase TruB family. Type 1 subfamily.

The enzyme catalyses uridine(55) in tRNA = pseudouridine(55) in tRNA. Responsible for synthesis of pseudouridine from uracil-55 in the psi GC loop of transfer RNAs. In Bacillus cereus (strain ATCC 10987 / NRS 248), this protein is tRNA pseudouridine synthase B.